Consider the following 316-residue polypeptide: Ribosomal RNA small subunit methyltransferase H (316 aa).

Residues 35 to 37 (GGH), Asp55, Phe79, Asp101, and Gln108 each bind S-adenosyl-L-methionine.

The protein belongs to the methyltransferase superfamily. RsmH family.

It is found in the cytoplasm. It catalyses the reaction cytidine(1402) in 16S rRNA + S-adenosyl-L-methionine = N(4)-methylcytidine(1402) in 16S rRNA + S-adenosyl-L-homocysteine + H(+). Functionally, specifically methylates the N4 position of cytidine in position 1402 (C1402) of 16S rRNA. The polypeptide is Ribosomal RNA small subunit methyltransferase H (Aliivibrio fischeri (strain ATCC 700601 / ES114) (Vibrio fischeri)).